A 300-amino-acid polypeptide reads, in one-letter code: 4-hydroxy-tetrahydrodipicolinate synthase (300 aa).

Thr46 provides a ligand contact to pyruvate. Residue Tyr135 is the Proton donor/acceptor of the active site. Lys163 acts as the Schiff-base intermediate with substrate in catalysis. Val205 is a binding site for pyruvate.

This sequence belongs to the DapA family. Homotetramer; dimer of dimers.

It localises to the cytoplasm. The catalysed reaction is L-aspartate 4-semialdehyde + pyruvate = (2S,4S)-4-hydroxy-2,3,4,5-tetrahydrodipicolinate + H2O + H(+). It functions in the pathway amino-acid biosynthesis; L-lysine biosynthesis via DAP pathway; (S)-tetrahydrodipicolinate from L-aspartate: step 3/4. In terms of biological role, catalyzes the condensation of (S)-aspartate-beta-semialdehyde [(S)-ASA] and pyruvate to 4-hydroxy-tetrahydrodipicolinate (HTPA). The sequence is that of 4-hydroxy-tetrahydrodipicolinate synthase from Koribacter versatilis (strain Ellin345).